A 984-amino-acid polypeptide reads, in one-letter code: Mediator of RNA polymerase II transcription subunit 5 (984 aa).

The protein belongs to the Mediator complex subunit 5 family. In terms of assembly, component of the Mediator complex.

Its subcellular location is the nucleus. Its function is as follows. Component of the Mediator complex, a coactivator involved in the regulated transcription of nearly all RNA polymerase II-dependent genes. Mediator functions as a bridge to convey information from gene-specific regulatory proteins to the basal RNA polymerase II transcription machinery. Mediator is recruited to promoters by direct interactions with regulatory proteins and serves as a scaffold for the assembly of a functional preinitiation complex with RNA polymerase II and the general transcription factors. This Phaeosphaeria nodorum (strain SN15 / ATCC MYA-4574 / FGSC 10173) (Glume blotch fungus) protein is Mediator of RNA polymerase II transcription subunit 5 (NUT1).